The primary structure comprises 574 residues: Proline--tRNA ligase (574 aa).

The protein belongs to the class-II aminoacyl-tRNA synthetase family. ProS type 1 subfamily. Homodimer.

Its subcellular location is the cytoplasm. The enzyme catalyses tRNA(Pro) + L-proline + ATP = L-prolyl-tRNA(Pro) + AMP + diphosphate. Catalyzes the attachment of proline to tRNA(Pro) in a two-step reaction: proline is first activated by ATP to form Pro-AMP and then transferred to the acceptor end of tRNA(Pro). As ProRS can inadvertently accommodate and process non-cognate amino acids such as alanine and cysteine, to avoid such errors it has two additional distinct editing activities against alanine. One activity is designated as 'pretransfer' editing and involves the tRNA(Pro)-independent hydrolysis of activated Ala-AMP. The other activity is designated 'posttransfer' editing and involves deacylation of mischarged Ala-tRNA(Pro). The misacylated Cys-tRNA(Pro) is not edited by ProRS. In Nitrosococcus oceani (strain ATCC 19707 / BCRC 17464 / JCM 30415 / NCIMB 11848 / C-107), this protein is Proline--tRNA ligase.